The following is a 468-amino-acid chain: 3-isopropylmalate dehydratase large subunit (468 aa).

Residues C347, C408, and C411 each coordinate [4Fe-4S] cluster.

The protein belongs to the aconitase/IPM isomerase family. LeuC type 1 subfamily. In terms of assembly, heterodimer of LeuC and LeuD. [4Fe-4S] cluster serves as cofactor.

The catalysed reaction is (2R,3S)-3-isopropylmalate = (2S)-2-isopropylmalate. The protein operates within amino-acid biosynthesis; L-leucine biosynthesis; L-leucine from 3-methyl-2-oxobutanoate: step 2/4. In terms of biological role, catalyzes the isomerization between 2-isopropylmalate and 3-isopropylmalate, via the formation of 2-isopropylmaleate. The sequence is that of 3-isopropylmalate dehydratase large subunit from Janthinobacterium sp. (strain Marseille) (Minibacterium massiliensis).